We begin with the raw amino-acid sequence, 230 residues long: NAD-dependent protein deacylase 1 (230 aa).

The Deacetylase sirtuin-type domain maps to 1–226 (MESGIPTYRE…SHLSAFLSRE (226 aa)). Substrate is bound by residues tyrosine 41 and arginine 44. Residue 75-78 (QNID) coordinates NAD(+). Histidine 93 functions as the Proton acceptor in the catalytic mechanism. Zn(2+) is bound by residues cysteine 101, cysteine 104, cysteine 128, and cysteine 131. NAD(+) contacts are provided by residues 168-170 (GTS), 194-196 (NTV), and alanine 212.

Belongs to the sirtuin family. Class III subfamily. Zn(2+) is required as a cofactor.

Its subcellular location is the cytoplasm. The enzyme catalyses N(6)-acetyl-L-lysyl-[protein] + NAD(+) + H2O = 2''-O-acetyl-ADP-D-ribose + nicotinamide + L-lysyl-[protein]. It catalyses the reaction N(6)-succinyl-L-lysyl-[protein] + NAD(+) + H2O = 2''-O-succinyl-ADP-D-ribose + nicotinamide + L-lysyl-[protein]. Its function is as follows. NAD-dependent lysine deacetylase and desuccinylase that specifically removes acetyl and succinyl groups on target proteins. Modulates the activities of several proteins which are inactive in their acylated form. The protein is NAD-dependent protein deacylase 1 of Pseudomonas syringae pv. tomato (strain ATCC BAA-871 / DC3000).